Here is a 330-residue protein sequence, read N- to C-terminus: tRNA U34 carboxymethyltransferase (330 aa).

Carboxy-S-adenosyl-L-methionine contacts are provided by residues Lys98, Trp112, Lys117, Gly137, 187-188, Met203, Tyr207, and Arg322; that span reads ME. The segment at 309–330 is disordered; it reads NPSKTIEGYPGPKRATLIAEKP.

Belongs to the class I-like SAM-binding methyltransferase superfamily. CmoB family. As to quaternary structure, homotetramer.

The catalysed reaction is carboxy-S-adenosyl-L-methionine + 5-hydroxyuridine(34) in tRNA = 5-carboxymethoxyuridine(34) in tRNA + S-adenosyl-L-homocysteine + H(+). Its function is as follows. Catalyzes carboxymethyl transfer from carboxy-S-adenosyl-L-methionine (Cx-SAM) to 5-hydroxyuridine (ho5U) to form 5-carboxymethoxyuridine (cmo5U) at position 34 in tRNAs. The polypeptide is tRNA U34 carboxymethyltransferase (Marinobacter nauticus (strain ATCC 700491 / DSM 11845 / VT8) (Marinobacter aquaeolei)).